Here is a 329-residue protein sequence, read N- to C-terminus: Homeobox protein Nkx-3.2 (329 aa).

The interval 107-188 is disordered; the sequence is GLGSPCGGAP…PDPSPPDEDP (82 aa). Positions 110–124 are enriched in gly residues; that stretch reads SPCGGAPGAGAGGEP. A compositionally biased stretch (basic and acidic residues) spans 138 to 160; sequence ELGRPGDIGERKKQRPLEARAKG. Positions 202–261 form a DNA-binding region, homeobox; the sequence is KKRSRAAFSHAQVFELERRFNHQRYLSGPERADLAASLKLTETQVKIWFQNRRYKTKRRQ.

It belongs to the NK-3 homeobox family. As to expression, first expressed in developing facial cartilage in early tailbud embryos, with expression localized to the basihyobranchial, palatoquadrate and possibly Meckel's cartilages. Shortly after, a second area of expression is seen in the musculature of the anterior gut. During late embryogenesis, gut expression extends into hindgut tissues. In adults, expressed at a high level in the kidney, pancreas, spleen and stomach and at a slightly lower level in the intestine, skeletal muscle and tongue. Adult heart, liver and lung show little or no expression.

The protein resides in the nucleus. In Xenopus laevis (African clawed frog), this protein is Homeobox protein Nkx-3.2 (nkx3-2).